Consider the following 452-residue polypeptide: Lysine-rich nucleolar protein 1 (452 aa).

Disordered regions lie at residues 1–28 (MITK…VKEP), 55–161 (VIQE…AFSG), and 184–305 (REQA…PDTD). A Glycyl lysine isopeptide (Lys-Gly) (interchain with G-Cter in SUMO2) cross-link involves residue lysine 7. The segment covering 65–75 (LVKKKKKKKGH) has biased composition (basic residues). Residues 78–98 (ICEEHLEPEITLRAGRTERSH) show a composition bias toward basic and acidic residues. Position 112 is a phosphoserine (serine 112). Lysine 126 is covalently cross-linked (Glycyl lysine isopeptide (Lys-Gly) (interchain with G-Cter in SUMO2)). Residues 127–139 (TSPDPRQDEEVTR) are compositionally biased toward basic and acidic residues. Serine 128 carries the phosphoserine modification. Basic residues-rich tracts occupy residues 140-151 (VGKKLKKHKKEK) and 258-267 (SVKKKVKSKK). Serine 258 carries the post-translational modification Phosphoserine. Lysine 280 participates in a covalent cross-link: Glycyl lysine isopeptide (Lys-Gly) (interchain with G-Cter in SUMO2). Residues 293–305 (VAEEPWEEEPDTD) show a composition bias toward acidic residues. The tract at residues 300–452 (EEPDTDLEVV…NASKSIKFED (153 aa)) is interaction with ZNF106. Threonine 304 carries the phosphothreonine modification. Residues lysine 313, lysine 347, lysine 367, lysine 369, and lysine 401 each participate in a glycyl lysine isopeptide (Lys-Gly) (interchain with G-Cter in SUMO2) cross-link. Arginine 424 is modified (omega-N-methylarginine). Lysine 436 participates in a covalent cross-link: Glycyl lysine isopeptide (Lys-Gly) (interchain with G-Cter in SUMO2).

As to quaternary structure, interacts with ZNF106.

The protein localises to the nucleus. It localises to the nucleolus. This chain is Lysine-rich nucleolar protein 1 (KNOP1), found in Bos taurus (Bovine).